The primary structure comprises 127 residues: Small ribosomal subunit protein eS8 (127 aa).

Positions 1–33 (MAIWQGKSMKKPSGGRAKMNRGKRKYELGREPA) are disordered.

This sequence belongs to the eukaryotic ribosomal protein eS8 family. Part of the 30S ribosomal subunit.

In Methanothermobacter thermautotrophicus (strain ATCC 29096 / DSM 1053 / JCM 10044 / NBRC 100330 / Delta H) (Methanobacterium thermoautotrophicum), this protein is Small ribosomal subunit protein eS8 (rps8e).